We begin with the raw amino-acid sequence, 381 residues long: Pentraxin-related protein PTX3 (381 aa).

Positions 1–17 are cleaved as a signal peptide; that stretch reads MHLLAILFCALWSAVLA. 2 coiled-coil regions span residues 74 to 101 and 143 to 167; these read LQAT…SLAR and EEAG…HAVQ. Intrachain disulfides connect Cys-179–Cys-357 and Cys-210–Cys-271. Residues 179-381 form the Pentraxin (PTX) domain; the sequence is CETAILFPMR…QPHGGAQYVS (203 aa). N-linked (GlcNAc...) asparagine glycosylation is present at Asn-220.

Homooctamer; disulfide-linked. Binds to C1q. In terms of assembly, (Microbial infection) Interacts with SARS coronavirus-2/SARS-CoV-2 Nucleoprotein and Spike protein homotrimer. Post-translationally, glycosylated.

Its subcellular location is the secreted. In terms of biological role, plays a role in the regulation of innate resistance to pathogens, inflammatory reactions, possibly clearance of self-components and female fertility. The protein is Pentraxin-related protein PTX3 of Homo sapiens (Human).